The chain runs to 293 residues: uncharacterized protein (293 aa).

Residues 1 to 58 (MQLQELHMLVVLAEELNMRKAAERLFVSQPALSQRLQTIEKAWGTKIFLRSQKGLTVT) form the HTH lysR-type domain. The H-T-H motif DNA-binding region spans 18–37 (MRKAAERLFVSQPALSQRLQ).

It belongs to the LysR transcriptional regulatory family.

This is an uncharacterized protein from Bacillus subtilis (strain 168).